We begin with the raw amino-acid sequence, 546 residues long: SusD-like protein BACOVA_02651 (546 aa).

Positions 1–21 (MRIFMKSKLLVIATTALLFAA) are cleaved as a signal peptide. A lipid anchor (N-palmitoyl cysteine) is attached at Cys-22. The S-diacylglycerol cysteine moiety is linked to residue Cys-22.

The protein belongs to the SusD family.

Its subcellular location is the cell outer membrane. The protein operates within glucan metabolism; xyloglucan degradation. In terms of biological role, polysaccharide-binding protein present at the surface of the cell. Probably mediates xyloglucan-binding before xyloglucan transport in the periplasm for degradation. The chain is SusD-like protein BACOVA_02651 from Bacteroides ovatus (strain ATCC 8483 / DSM 1896 / JCM 5824 / BCRC 10623 / CCUG 4943 / NCTC 11153).